The primary structure comprises 238 residues: Probable transcriptional regulatory protein SPH_2064 (238 aa).

Belongs to the TACO1 family. YeeN subfamily.

Its subcellular location is the cytoplasm. The sequence is that of Probable transcriptional regulatory protein SPH_2064 from Streptococcus pneumoniae (strain Hungary19A-6).